The sequence spans 487 residues: Protein nucleotidyltransferase YdiU (487 aa).

The ATP site is built by Gly-92, Arg-95, Lys-106, Asp-118, Gly-119, Arg-169, and Arg-176. Catalysis depends on Asp-253, which acts as the Proton acceptor. Mg(2+) is bound by residues Asn-254 and Asp-263. Residue Asp-263 participates in ATP binding.

It belongs to the SELO family. Mg(2+) is required as a cofactor. The cofactor is Mn(2+).

It catalyses the reaction L-seryl-[protein] + ATP = 3-O-(5'-adenylyl)-L-seryl-[protein] + diphosphate. The catalysed reaction is L-threonyl-[protein] + ATP = 3-O-(5'-adenylyl)-L-threonyl-[protein] + diphosphate. It carries out the reaction L-tyrosyl-[protein] + ATP = O-(5'-adenylyl)-L-tyrosyl-[protein] + diphosphate. The enzyme catalyses L-histidyl-[protein] + UTP = N(tele)-(5'-uridylyl)-L-histidyl-[protein] + diphosphate. It catalyses the reaction L-seryl-[protein] + UTP = O-(5'-uridylyl)-L-seryl-[protein] + diphosphate. The catalysed reaction is L-tyrosyl-[protein] + UTP = O-(5'-uridylyl)-L-tyrosyl-[protein] + diphosphate. Its function is as follows. Nucleotidyltransferase involved in the post-translational modification of proteins. It can catalyze the addition of adenosine monophosphate (AMP) or uridine monophosphate (UMP) to a protein, resulting in modifications known as AMPylation and UMPylation. The sequence is that of Protein nucleotidyltransferase YdiU from Bordetella pertussis (strain Tohama I / ATCC BAA-589 / NCTC 13251).